The following is a 257-amino-acid chain: Hydroxyethylthiazole kinase (257 aa).

Met-49 serves as a coordination point for substrate. The ATP site is built by Arg-124 and Thr-170. Gly-197 serves as a coordination point for substrate.

Belongs to the Thz kinase family. It depends on Mg(2+) as a cofactor.

It carries out the reaction 5-(2-hydroxyethyl)-4-methylthiazole + ATP = 4-methyl-5-(2-phosphooxyethyl)-thiazole + ADP + H(+). The protein operates within cofactor biosynthesis; thiamine diphosphate biosynthesis; 4-methyl-5-(2-phosphoethyl)-thiazole from 5-(2-hydroxyethyl)-4-methylthiazole: step 1/1. In terms of biological role, catalyzes the phosphorylation of the hydroxyl group of 4-methyl-5-beta-hydroxyethylthiazole (THZ). This chain is Hydroxyethylthiazole kinase, found in Klebsiella pneumoniae subsp. pneumoniae (strain ATCC 700721 / MGH 78578).